A 375-amino-acid chain; its full sequence is Sulfite efflux pump SSU1 (375 aa).

At 1–25 (MPSGSGFHNIEEAGEKARKRDDWIA) the chain is on the cytoplasmic side. Residues 26–46 (ISNFHPGWFSVNMGTGITAIL) form a helical membrane-spanning segment. The Extracellular portion of the chain corresponds to 47 to 59 (LQNLPYQFPGLHY). The helical transmembrane segment at 60–80 (IAVVLFILNVIIFFLFLTISI) threads the bilayer. Residues 81–101 (TRYCLWPDKFKAMLAHPAHSM) lie on the Cytoplasmic side of the membrane. A helical transmembrane segment spans residues 102-122 (LLGTFPMGFATIINCIVFICV). The Extracellular segment spans residues 123 to 135 (PVWGEWASRFAWG). Residues 136 to 156 (LWWIDAAVSVAICYFVPFMLM) traverse the membrane as a helical segment. The Cytoplasmic segment spans residues 157-167 (TKHTSSLETMT). The helical transmembrane segment at 168–188 (AAWLLPIVAPVVAAASGGVVA) threads the bilayer. Residues 189–200 (DSLQNDTHALIT) lie on the Extracellular side of the membrane. A glycan (N-linked (GlcNAc...) asparagine) is linked at Asn-193. Residues 201 to 221 (ILVCYAMWGSAVPLAMVILVI) traverse the membrane as a helical segment. Over 222-234 (YFQRLAIHKLVPR) the chain is Cytoplasmic. A helical membrane pass occupies residues 235–255 (AAIVSALLPIGPLGQGGFGLM). Over 256 to 277 (QLGVVAKRVFPRLDFLAPIAGD) the chain is Extracellular. Residues 278–298 (IFYVMGAFIAMIMWGFGLIWL) traverse the membrane as a helical segment. Over 299–309 (WFALASFTRGK) the chain is Cytoplasmic. The helical transmembrane segment at 310-330 (FYFNIGWWAFTFPLGVFTTAT) threads the bilayer. At 331–343 (TQMGKEFNSPFFD) the chain is on the extracellular side. A helical transmembrane segment spans residues 344-364 (ILGTFFSIVVTCMWVLVFALT). Over 365-375 (VYKSCTKELFR) the chain is Cytoplasmic.

It belongs to the tellurite-resistance/dicarboxylate transporter (TDT) family.

The protein localises to the cell membrane. Functionally, sulphite efflux pump required for the secretion of sulphite as a reducing agent. In the presence of sulphite, cystine in keratin is directly cleaved to cysteine and S-sulphocysteine, and thereby, reduced proteins become accessible to hydrolysis by a variety of secreted endo- and exoproteases. Excretion of sulphite mediated by an efflux pump also represents a detoxification pathway for dermatophytes during infection of the epidermal stratum corneum, hair and nails, which are rich in cysteine. The sequence is that of Sulfite efflux pump SSU1 (SSU1) from Trichophyton rubrum (Athlete's foot fungus).